A 129-amino-acid chain; its full sequence is Small ribosomal subunit protein uS11 (129 aa).

This sequence belongs to the universal ribosomal protein uS11 family. In terms of assembly, part of the 30S ribosomal subunit. Interacts with proteins S7 and S18. Binds to IF-3.

Its function is as follows. Located on the platform of the 30S subunit, it bridges several disparate RNA helices of the 16S rRNA. Forms part of the Shine-Dalgarno cleft in the 70S ribosome. The chain is Small ribosomal subunit protein uS11 from Mannheimia succiniciproducens (strain KCTC 0769BP / MBEL55E).